Consider the following 390-residue polypeptide: L-rhamnonate dehydratase (390 aa).

The substrate site is built by His-19 and Arg-45. Mg(2+) contacts are provided by Asp-211, Glu-237, and Glu-265. The active-site Proton acceptor is His-315. Glu-335 is a substrate binding site.

This sequence belongs to the mandelate racemase/muconate lactonizing enzyme family. RhamD subfamily. The cofactor is Mg(2+).

The enzyme catalyses L-rhamnonate = 2-dehydro-3-deoxy-L-rhamnonate + H2O. Functionally, catalyzes the dehydration of L-rhamnonate to 2-keto-3-deoxy-L-rhamnonate (KDR). The polypeptide is L-rhamnonate dehydratase (Saccharopolyspora erythraea (strain ATCC 11635 / DSM 40517 / JCM 4748 / NBRC 13426 / NCIMB 8594 / NRRL 2338)).